We begin with the raw amino-acid sequence, 422 residues long: Adenylosuccinate synthetase (422 aa).

GTP is bound by residues 11 to 17 (GDEGKGK) and 39 to 41 (GHT). D12 serves as the catalytic Proton acceptor. D12 and G39 together coordinate Mg(2+). IMP-binding positions include 12 to 15 (DEGK), 37 to 40 (NAGH), T129, R143, N219, T234, and R298. Catalysis depends on H40, which acts as the Proton donor. A substrate-binding site is contributed by 294–300 (VTTGRRR). Residues R300, 326 to 328 (KLD), and 409 to 411 (GTG) each bind GTP.

The protein belongs to the adenylosuccinate synthetase family. In terms of assembly, homodimer. The cofactor is Mg(2+).

It is found in the cytoplasm. The enzyme catalyses IMP + L-aspartate + GTP = N(6)-(1,2-dicarboxyethyl)-AMP + GDP + phosphate + 2 H(+). Its pathway is purine metabolism; AMP biosynthesis via de novo pathway; AMP from IMP: step 1/2. Its function is as follows. Plays an important role in the de novo pathway and in the salvage pathway of purine nucleotide biosynthesis. Catalyzes the first committed step in the biosynthesis of AMP from IMP. The sequence is that of Adenylosuccinate synthetase from Ajellomyces capsulatus (strain H143) (Darling's disease fungus).